A 428-amino-acid chain; its full sequence is Methyl-branched lipid omega-hydroxylase (428 aa).

Heme is bound at residue C379.

The protein belongs to the cytochrome P450 family. Requires heme as cofactor.

The enzyme catalyses a methyl-branched lipid + O2 + 2 reduced ferredoxin [iron-sulfur] cluster + 2 H(+) = an omega-hydroxy-methyl-branched lipid + H2O + 2 oxidized ferredoxin [iron-sulfur] cluster.. It carries out the reaction cholest-4-en-3-one + 6 reduced [2Fe-2S]-[ferredoxin] + 3 O2 + 5 H(+) = (25R)-3-oxocholest-4-en-26-oate + 6 oxidized [2Fe-2S]-[ferredoxin] + 4 H2O. It participates in lipid metabolism; branched-chain fatty acid metabolism. Functionally, primarily hydroxylates the omega-carbon of a number of methyl-branched lipids, including (2E,6E)-farnesol, phytanate, geranylgeraniol, 15-methylpalmitate and (2E,6E)-farnesyl diphosphate. Also catalyzes the sequential oxidation of the terminal methyl of cholest-4-en-3-one into (25R)-26-hydroxycholest-4-en-3-one (alcohol), (25R)-26-oxocholest-4-en-3-one (aldehyde), to finally yield the carboxylic acid (25R)-3-oxocholest-4-en-26-oate. Also able to sequentially oxidize cholesterol itself, not only cholest-4-en-3-one. This Mycobacterium tuberculosis (strain CDC 1551 / Oshkosh) protein is Methyl-branched lipid omega-hydroxylase (cyp124).